A 59-amino-acid chain; its full sequence is UPF0434 protein Shewmr7_2490 (59 aa).

This sequence belongs to the UPF0434 family.

This is UPF0434 protein Shewmr7_2490 from Shewanella sp. (strain MR-7).